The chain runs to 273 residues: Undecaprenyl-diphosphatase (273 aa).

A run of 7 helical transmembrane segments spans residues 6–26 (SLLI…LPVS), 45–65 (AKTF…VMFW), 90–110 (LTLI…LLFH), 116–136 (LFNP…LIAA), 190–210 (YAAS…ATAL), 222–242 (GDIP…LIAI), and 252–272 (ISFI…YVVF).

Belongs to the UppP family.

The protein resides in the cell inner membrane. It carries out the reaction di-trans,octa-cis-undecaprenyl diphosphate + H2O = di-trans,octa-cis-undecaprenyl phosphate + phosphate + H(+). Its function is as follows. Catalyzes the dephosphorylation of undecaprenyl diphosphate (UPP). Confers resistance to bacitracin. The sequence is that of Undecaprenyl-diphosphatase from Escherichia coli O157:H7.